The chain runs to 318 residues: Porphobilinogen deaminase (318 aa).

Cys245 bears the S-(dipyrrolylmethanemethyl)cysteine mark.

The protein belongs to the HMBS family. Monomer. Requires dipyrromethane as cofactor.

The enzyme catalyses 4 porphobilinogen + H2O = hydroxymethylbilane + 4 NH4(+). It participates in porphyrin-containing compound metabolism; protoporphyrin-IX biosynthesis; coproporphyrinogen-III from 5-aminolevulinate: step 2/4. The protein operates within porphyrin-containing compound metabolism; chlorophyll biosynthesis. In terms of biological role, tetrapolymerization of the monopyrrole PBG into the hydroxymethylbilane pre-uroporphyrinogen in several discrete steps. The protein is Porphobilinogen deaminase of Prochlorococcus marinus (strain MIT 9215).